A 410-amino-acid polypeptide reads, in one-letter code: Cytochrome P450(BM-1) (410 aa).

Cys356 serves as a coordination point for heme.

It belongs to the cytochrome P450 family. The cofactor is heme.

Its subcellular location is the cytoplasm. Functionally, cytochromes P450 are a group of heme-thiolate monooxygenases. They oxidize a variety of structurally unrelated compounds, including steroids, fatty acids, and xenobiotics. The polypeptide is Cytochrome P450(BM-1) (cyp106) (Priestia megaterium (strain ATCC 14581 / DSM 32 / CCUG 1817 / JCM 2506 / NBRC 15308 / NCIMB 9376 / NCTC 10342 / NRRL B-14308 / VKM B-512 / Ford 19) (Bacillus megaterium)).